A 157-amino-acid chain; its full sequence is 2-C-methyl-D-erythritol 2,4-cyclodiphosphate synthase (157 aa).

A divalent metal cation is bound by residues Asp8 and His10. 4-CDP-2-C-methyl-D-erythritol 2-phosphate contacts are provided by residues 8–10 and 34–35; these read DVH and HS. An a divalent metal cation-binding site is contributed by His42. 4-CDP-2-C-methyl-D-erythritol 2-phosphate-binding positions include 56 to 58, 61 to 65, 100 to 106, 132 to 135, Phe139, and Arg142; these read DIG, FPDTD, AQRPKMA, and TTTE.

It belongs to the IspF family. As to quaternary structure, homotrimer. Requires a divalent metal cation as cofactor.

It catalyses the reaction 4-CDP-2-C-methyl-D-erythritol 2-phosphate = 2-C-methyl-D-erythritol 2,4-cyclic diphosphate + CMP. It participates in isoprenoid biosynthesis; isopentenyl diphosphate biosynthesis via DXP pathway; isopentenyl diphosphate from 1-deoxy-D-xylulose 5-phosphate: step 4/6. Involved in the biosynthesis of isopentenyl diphosphate (IPP) and dimethylallyl diphosphate (DMAPP), two major building blocks of isoprenoid compounds. Catalyzes the conversion of 4-diphosphocytidyl-2-C-methyl-D-erythritol 2-phosphate (CDP-ME2P) to 2-C-methyl-D-erythritol 2,4-cyclodiphosphate (ME-CPP) with a corresponding release of cytidine 5-monophosphate (CMP). In Geobacter sulfurreducens (strain ATCC 51573 / DSM 12127 / PCA), this protein is 2-C-methyl-D-erythritol 2,4-cyclodiphosphate synthase.